The following is a 273-amino-acid chain: Putative pyruvate, phosphate dikinase regulatory protein (273 aa).

149–156 provides a ligand contact to ADP; it reads GPSRTSKT.

This sequence belongs to the pyruvate, phosphate/water dikinase regulatory protein family. PDRP subfamily.

The catalysed reaction is N(tele)-phospho-L-histidyl/L-threonyl-[pyruvate, phosphate dikinase] + ADP = N(tele)-phospho-L-histidyl/O-phospho-L-threonyl-[pyruvate, phosphate dikinase] + AMP + H(+). It carries out the reaction N(tele)-phospho-L-histidyl/O-phospho-L-threonyl-[pyruvate, phosphate dikinase] + phosphate + H(+) = N(tele)-phospho-L-histidyl/L-threonyl-[pyruvate, phosphate dikinase] + diphosphate. Its function is as follows. Bifunctional serine/threonine kinase and phosphorylase involved in the regulation of the pyruvate, phosphate dikinase (PPDK) by catalyzing its phosphorylation/dephosphorylation. The protein is Putative pyruvate, phosphate dikinase regulatory protein of Rickettsia prowazekii (strain Madrid E).